Reading from the N-terminus, the 98-residue chain is MAQGQRKFQAQKPAKSKAAAAAASARNRGPRKGGRVIAPKKARIVQQQQLKKNLEVGIRKKIEHDVVMKASTSLPKKLALLKASTKKKEASSSTKMPA.

Disordered regions lie at residues 1–38 (MAQGQRKFQAQKPAKSKAAAAAASARNRGPRKGGRVIA) and 73–98 (SLPKKLALLKASTKKKEASSSTKMPA). The segment covering 16 to 25 (SKAAAAAASA) has biased composition (low complexity). The segment covering 28–38 (RGPRKGGRVIA) has biased composition (basic residues). Residues 73–83 (SLPKKLALLKA) show a composition bias toward low complexity.

It belongs to the UPF0390 family.

Functionally, may have a potential role in hypercalcemia of malignancy. This Bos taurus (Bovine) protein is Leydig cell tumor 10 kDa protein homolog.